Here is a 249-residue protein sequence, read N- to C-terminus: MIT domain-containing protein 1 (249 aa).

One can recognise an MIT domain in the interval 8 to 86 (QDPQSTAAAT…KYLDQEKEDG (79 aa)). An important for association with membranes region spans residues 168–231 (RGLQEIEESL…SLGYCDFDLR (64 aa)).

In terms of assembly, homodimer. Interacts (via MIT domain) with CHMP1A, CHMP1B, CHMP2A and IST1.

The protein localises to the late endosome membrane. It localises to the midbody. The protein resides in the membrane. Its function is as follows. Required for efficient abscission at the end of cytokinesis, together with components of the ESCRT-III complex. The protein is MIT domain-containing protein 1 (MITD1) of Homo sapiens (Human).